The following is a 336-amino-acid chain: Ketol-acid reductoisomerase (NADP(+)) 1 (336 aa).

Residues 2-181 form the KARI N-terminal Rossmann domain; the sequence is AKVYYEKDVT…GATRAGVLET (180 aa). Residues 25–28, Arg-48, Ser-52, and 82–85 contribute to the NADP(+) site; these read YGSQ and DELQ. His-107 is an active-site residue. Gly-133 serves as a coordination point for NADP(+). Residues 182–327 enclose the KARI C-terminal knotted domain; it reads TFKEETETDL…RKLREMMPFV (146 aa). Positions 190, 194, 226, and 230 each coordinate Mg(2+). Position 251 (Ser-251) interacts with substrate.

The protein belongs to the ketol-acid reductoisomerase family. It depends on Mg(2+) as a cofactor.

It catalyses the reaction (2R)-2,3-dihydroxy-3-methylbutanoate + NADP(+) = (2S)-2-acetolactate + NADPH + H(+). It carries out the reaction (2R,3R)-2,3-dihydroxy-3-methylpentanoate + NADP(+) = (S)-2-ethyl-2-hydroxy-3-oxobutanoate + NADPH + H(+). The protein operates within amino-acid biosynthesis; L-isoleucine biosynthesis; L-isoleucine from 2-oxobutanoate: step 2/4. It participates in amino-acid biosynthesis; L-valine biosynthesis; L-valine from pyruvate: step 2/4. Involved in the biosynthesis of branched-chain amino acids (BCAA). Catalyzes an alkyl-migration followed by a ketol-acid reduction of (S)-2-acetolactate (S2AL) to yield (R)-2,3-dihydroxy-isovalerate. In the isomerase reaction, S2AL is rearranged via a Mg-dependent methyl migration to produce 3-hydroxy-3-methyl-2-ketobutyrate (HMKB). In the reductase reaction, this 2-ketoacid undergoes a metal-dependent reduction by NADPH to yield (R)-2,3-dihydroxy-isovalerate. The protein is Ketol-acid reductoisomerase (NADP(+)) 1 of Bacillus cereus (strain ATCC 14579 / DSM 31 / CCUG 7414 / JCM 2152 / NBRC 15305 / NCIMB 9373 / NCTC 2599 / NRRL B-3711).